We begin with the raw amino-acid sequence, 511 residues long: Cytochrome P450 93B2 (511 aa).

Residues 4–24 traverse the membrane as a helical segment; it reads LQLIFLLFFFPTLLFLYCLPY. C447 serves as a coordination point for heme.

This sequence belongs to the cytochrome P450 family. Heme serves as cofactor.

Its subcellular location is the membrane. The enzyme catalyses a flavanone + reduced [NADPH--hemoprotein reductase] + O2 = a flavone + oxidized [NADPH--hemoprotein reductase] + 2 H2O + H(+). It participates in secondary metabolite biosynthesis; flavonoid biosynthesis. Functionally, functions as a flavone synthase II (FNSII) that catalyzes the direct conversion of flavanones to flavones. In vitro, can convert liquiritigenin, naringenin and eriodictyol to 7,4'-dihydroxyflavone, apigenin and luteolin, respectively. The chain is Cytochrome P450 93B2 from Gerbera hybrida (Daisy).